A 61-amino-acid chain; its full sequence is Small ribosomal subunit protein uS14 (61 aa).

The Zn(2+) site is built by Cys24, Cys27, Cys40, and Cys43.

It belongs to the universal ribosomal protein uS14 family. Zinc-binding uS14 subfamily. In terms of assembly, part of the 30S ribosomal subunit. Contacts proteins S3 and S10. Requires Zn(2+) as cofactor.

Its function is as follows. Binds 16S rRNA, required for the assembly of 30S particles and may also be responsible for determining the conformation of the 16S rRNA at the A site. In Alkaliphilus metalliredigens (strain QYMF), this protein is Small ribosomal subunit protein uS14.